The chain runs to 50 residues: Acidic phospholipase A2 1 (50 aa).

Residues tyrosine 27, glycine 29, and glycine 31 each coordinate Ca(2+). An intrachain disulfide couples cysteine 28 to cysteine 44. Histidine 47 is a catalytic residue. A Ca(2+)-binding site is contributed by aspartate 48.

This sequence belongs to the phospholipase A2 family. Group II subfamily. D49 sub-subfamily. In terms of assembly, monomer. Ca(2+) is required as a cofactor. Expressed by the venom gland.

Its subcellular location is the secreted. The catalysed reaction is a 1,2-diacyl-sn-glycero-3-phosphocholine + H2O = a 1-acyl-sn-glycero-3-phosphocholine + a fatty acid + H(+). Snake venom phospholipase A2 (PLA2) that displays a potent enzymatic activity as measured by indirect hemolysis of red blood cells. Is neither lethal when injected into mice nor does it present anticoagulant activity. Displays a moderate inhibitory activity on the aggregation of platelets induced by low levels of ADP, thrombin and arachidonate. In contrast, strongly inhibits platelet aggregation induced by high doses of collagen. Shows myotoxic activity, increases the plasma creatine-kinase activity and induces edema and myonecrosis of mouse skeletal muscles. PLA2 catalyzes the calcium-dependent hydrolysis of the 2-acyl groups in 3-sn-phosphoglycerides. This chain is Acidic phospholipase A2 1, found in Lachesis muta muta (Bushmaster).